The sequence spans 230 residues: Demethylmenaquinone methyltransferase (230 aa).

S-adenosyl-L-methionine-binding positions include Thr-62, Asp-80, 100-101, and Ser-117; that span reads DA.

It belongs to the class I-like SAM-binding methyltransferase superfamily. MenG/UbiE family.

It catalyses the reaction a 2-demethylmenaquinol + S-adenosyl-L-methionine = a menaquinol + S-adenosyl-L-homocysteine + H(+). It participates in quinol/quinone metabolism; menaquinone biosynthesis; menaquinol from 1,4-dihydroxy-2-naphthoate: step 2/2. Methyltransferase required for the conversion of demethylmenaquinol (DMKH2) to menaquinol (MKH2). The polypeptide is Demethylmenaquinone methyltransferase (Mycobacterium sp. (strain JLS)).